The chain runs to 98 residues: NADH-ubiquinone oxidoreductase chain 4L (98 aa).

Transmembrane regions (helical) follow at residues 1–21 (MTTI…GVLI), 26–46 (LLST…LMAL), and 59–79 (APLI…ALLV).

The protein belongs to the complex I subunit 4L family. In terms of assembly, core subunit of respiratory chain NADH dehydrogenase (Complex I) which is composed of 45 different subunits.

It is found in the mitochondrion inner membrane. The catalysed reaction is a ubiquinone + NADH + 5 H(+)(in) = a ubiquinol + NAD(+) + 4 H(+)(out). Core subunit of the mitochondrial membrane respiratory chain NADH dehydrogenase (Complex I) which catalyzes electron transfer from NADH through the respiratory chain, using ubiquinone as an electron acceptor. Part of the enzyme membrane arm which is embedded in the lipid bilayer and involved in proton translocation. The polypeptide is NADH-ubiquinone oxidoreductase chain 4L (MT-ND4L) (Rhyncholestes raphanurus (Chilean shrew opossum)).